Here is a 206-residue protein sequence, read N- to C-terminus: Ribosome maturation factor RimP (206 aa).

Positions 164 to 206 (GGIPEGRAVPSDAVDLTDDSGVDSVEDDEAELEDVENEEGFDK) are disordered. Over residues 178–206 (DLTDDSGVDSVEDDEAELEDVENEEGFDK) the composition is skewed to acidic residues.

The protein belongs to the RimP family.

The protein localises to the cytoplasm. Functionally, required for maturation of 30S ribosomal subunits. The sequence is that of Ribosome maturation factor RimP from Rhodococcus erythropolis (strain PR4 / NBRC 100887).